Here is a 410-residue protein sequence, read N- to C-terminus: Cysteine desulfurase IscS (410 aa).

Pyridoxal 5'-phosphate-binding positions include A80 to T81, N160, Q188, and S208 to H210. Position 211 is an N6-(pyridoxal phosphate)lysine (K211). T248 contacts pyridoxal 5'-phosphate. Residue C334 is the Cysteine persulfide intermediate of the active site. C334 provides a ligand contact to [2Fe-2S] cluster.

This sequence belongs to the class-V pyridoxal-phosphate-dependent aminotransferase family. NifS/IscS subfamily. In terms of assembly, homodimer. Forms a heterotetramer with IscU, interacts with other sulfur acceptors. The cofactor is pyridoxal 5'-phosphate.

The protein resides in the cytoplasm. It carries out the reaction (sulfur carrier)-H + L-cysteine = (sulfur carrier)-SH + L-alanine. It functions in the pathway cofactor biosynthesis; iron-sulfur cluster biosynthesis. Master enzyme that delivers sulfur to a number of partners involved in Fe-S cluster assembly, tRNA modification or cofactor biosynthesis. Catalyzes the removal of elemental sulfur atoms from cysteine to produce alanine. Functions as a sulfur delivery protein for Fe-S cluster synthesis onto IscU, an Fe-S scaffold assembly protein, as well as other S acceptor proteins. The polypeptide is Cysteine desulfurase IscS (Rickettsia rickettsii (strain Iowa)).